Consider the following 343-residue polypeptide: tRNA-specific 2-thiouridylase MnmA 2 (343 aa).

Residues 7-14 (GMSGGVDS) and Leu-33 contribute to the ATP site. The active-site Nucleophile is the Cys-91. A disulfide bond links Cys-91 and Cys-189. Gly-115 serves as a coordination point for ATP. Positions 139-141 (KDQ) are interaction with tRNA. Residue Cys-189 is the Cysteine persulfide intermediate of the active site.

It belongs to the MnmA/TRMU family.

The protein resides in the cytoplasm. It catalyses the reaction S-sulfanyl-L-cysteinyl-[protein] + uridine(34) in tRNA + AH2 + ATP = 2-thiouridine(34) in tRNA + L-cysteinyl-[protein] + A + AMP + diphosphate + H(+). Its function is as follows. Catalyzes the 2-thiolation of uridine at the wobble position (U34) of tRNA, leading to the formation of s(2)U34. The chain is tRNA-specific 2-thiouridylase MnmA 2 from Fusobacterium nucleatum subsp. nucleatum (strain ATCC 25586 / DSM 15643 / BCRC 10681 / CIP 101130 / JCM 8532 / KCTC 2640 / LMG 13131 / VPI 4355).